The primary structure comprises 367 residues: Peptide chain release factor 2 (367 aa).

Gln-250 carries the post-translational modification N5-methylglutamine.

The protein belongs to the prokaryotic/mitochondrial release factor family. In terms of processing, methylated by PrmC. Methylation increases the termination efficiency of RF2.

It is found in the cytoplasm. Functionally, peptide chain release factor 2 directs the termination of translation in response to the peptide chain termination codons UGA and UAA. The polypeptide is Peptide chain release factor 2 (Saccharopolyspora erythraea (strain ATCC 11635 / DSM 40517 / JCM 4748 / NBRC 13426 / NCIMB 8594 / NRRL 2338)).